A 471-amino-acid polypeptide reads, in one-letter code: uncharacterized protein (471 aa).

4 helical membrane-spanning segments follow: residues 10-30 (ALWL…LFVI), 46-66 (IDDR…WFAI), 87-107 (TLII…LYFS), and 280-300 (IVVG…LYFA).

This sequence belongs to the bacterial sugar transferase family.

It localises to the cell membrane. It participates in glycan metabolism; exopolysaccharide biosynthesis. In terms of biological role, may function as a sugar transferase. This is an uncharacterized protein from Haemophilus influenzae (strain ATCC 51907 / DSM 11121 / KW20 / Rd).